The chain runs to 119 residues: Myohemerythrin-1 (119 aa).

Fe cation-binding residues include H25, H55, N58, E59, H74, H78, H107, and D112.

The protein belongs to the hemerythrin family. As to quaternary structure, monomer. Muscle.

Myohemerythrin is an oxygen-binding protein found in the retractor muscles of certain worms. The oxygen-binding site contains two iron atoms. The protein is Myohemerythrin-1 of Phascolopsis gouldii (Peanut worm).